The sequence spans 335 residues: Biotin synthase (335 aa).

The Radical SAM core domain maps to 46 to 274; it reads YNIQLASLFS…KSKIRLSAGR (229 aa). [4Fe-4S] cluster-binding residues include cysteine 61, cysteine 65, and cysteine 68. 4 residues coordinate [2Fe-2S] cluster: cysteine 105, cysteine 137, cysteine 197, and arginine 269.

It belongs to the radical SAM superfamily. Biotin synthase family. In terms of assembly, homodimer. [4Fe-4S] cluster serves as cofactor. The cofactor is [2Fe-2S] cluster.

The enzyme catalyses (4R,5S)-dethiobiotin + (sulfur carrier)-SH + 2 reduced [2Fe-2S]-[ferredoxin] + 2 S-adenosyl-L-methionine = (sulfur carrier)-H + biotin + 2 5'-deoxyadenosine + 2 L-methionine + 2 oxidized [2Fe-2S]-[ferredoxin]. The protein operates within cofactor biosynthesis; biotin biosynthesis; biotin from 7,8-diaminononanoate: step 2/2. Functionally, catalyzes the conversion of dethiobiotin (DTB) to biotin by the insertion of a sulfur atom into dethiobiotin via a radical-based mechanism. The sequence is that of Biotin synthase from Prochlorococcus marinus (strain AS9601).